A 286-amino-acid polypeptide reads, in one-letter code: Myb family transcription factor PHL7 (286 aa).

Positions 12–72 (HASKQRLRWT…HLQKYRLAKY (61 aa)) constitute an HTH myb-type domain. The H-T-H motif DNA-binding region spans 43-68 (PKGVLRVMGVQGLTIYHVKSHLQKYR). The disordered stretch occupies residues 74–97 (PDSSSEGKKTDKKESGDMLSGLDG). The span at 78-89 (SEGKKTDKKESG) shows a compositional bias: basic and acidic residues. A coiled-coil region spans residues 104-124 (TEALKLQMEVQKRLHEQLEVQ). An LHEQLE motif is present at residues 117–122 (LHEQLE). A disordered region spans residues 152-227 (LGEPSAPVTG…TGEERLSKKP (76 aa)).

This sequence belongs to the MYB-CC family.

The protein localises to the nucleus. This Arabidopsis thaliana (Mouse-ear cress) protein is Myb family transcription factor PHL7.